Here is a 1124-residue protein sequence, read N- to C-terminus: ATP-dependent DNA helicase mph1 (1124 aa).

2 disordered regions span residues 1-103 and 123-302; these read MFTL…EARS and QLTQ…PTQH. Composition is skewed to acidic residues over residues 7-17 and 169-178; these read DSSDYFDDDLG and RDDEYDDDEE. Over residues 210 to 222 the composition is skewed to polar residues; that stretch reads TPIIGQQSTTIEA. Positions 226-236 are enriched in acidic residues; the sequence is LLDDIPDDAFD. Residues 255–271 are compositionally biased toward polar residues; the sequence is SFTQSTNRPLGVRQTTL. One can recognise a Helicase ATP-binding domain in the interval 328–496; the sequence is IAQKGLFHNL…AVIDGLDISR (169 aa). 341 to 348 lines the ATP pocket; that stretch reads LPTGLGKT. The DEAH box signature appears at 444–447; it reads DEAH. A Helicase C-terminal domain is found at 666–840; that stretch reads YLKQVVLNHF…GTRFTFHDDM (175 aa). Basic and acidic residues predominate over residues 855–873; the sequence is KRAIDIPEENTVRDLPEPK. Disordered stretches follow at residues 855–923 and 1016–1124; these read KRAI…TPEP and MPKA…DSDD. Basic residues-rich tracts occupy residues 874–886 and 906–916; these read RRGR…PKKF and SKRRVPNKSKA.

This sequence belongs to the DEAD box helicase family. DEAH subfamily. FANCM sub-subfamily. As to quaternary structure, interacts with the MHF histone-fold complex to form the FANCM-MHF complex.

It is found in the nucleus. The catalysed reaction is ATP + H2O = ADP + phosphate + H(+). In terms of biological role, ATP-dependent DNA helicase involved in DNA damage repair by homologous recombination and in genome maintenance. Capable of unwinding D-loops. Plays a role in limiting crossover recombinants during mitotic DNA double-strand break (DSB) repair. Component of a FANCM-MHF complex which promotes gene conversion at blocked replication forks, probably by reversal of the stalled fork. This chain is ATP-dependent DNA helicase mph1, found in Aspergillus niger (strain ATCC MYA-4892 / CBS 513.88 / FGSC A1513).